The chain runs to 143 residues: MAARNKARKRAFQILFEADQRGESVQSVLADWVRLSRTDDRQPPVGEFTMELVEGYAQYADRIDDLIVTYAVDWEIDRMPVVDRSILRLGAYELIWMDGTPDAVVIDEAVQLAKEFSTDDSPSFVNGLLARFKDLKPNLRREQ.

Belongs to the NusB family.

Functionally, involved in transcription antitermination. Required for transcription of ribosomal RNA (rRNA) genes. Binds specifically to the boxA antiterminator sequence of the ribosomal RNA (rrn) operons. This chain is Transcription antitermination protein NusB, found in Streptomyces griseus subsp. griseus (strain JCM 4626 / CBS 651.72 / NBRC 13350 / KCC S-0626 / ISP 5235).